Here is an 82-residue protein sequence, read N- to C-terminus: Protein CYSTEINE-RICH TRANSMEMBRANE MODULE 13 (82 aa).

The tract at residues Met1 to Gln58 is disordered. The segment covering Ala26–Gly37 has biased composition (pro residues). The chain crosses the membrane as a helical span at residues Lys59–Cys76.

The protein belongs to the CYSTM1 family. Homodimer and heterodimers. Interacts with CYSTM7, CYTSM3, CYTSM4, CYTSM5, CYTSM6, CYTSM9, CYTSM10 and CYTSM11. Binds weakly to CYSTM1 and CYSTM2. In terms of tissue distribution, expressed in root meristem, root vasculature, leaf vasculature and floral organ primordia. Mostly expressed in roots and flowers and, to a lower extent, in stems, siliques and leaves.

Its subcellular location is the cell membrane. In terms of biological role, required for the promotion of megasporogenesis, or promotion of germ cell formation from somatic precursor cells. Acts redundantly with WIH2. Functions in a genetic pathway downstream of SPL/NZZ and WUS and together with TRN2 in promoting megasporogenesis. Involved in resistance to abiotic stress. The polypeptide is Protein CYSTEINE-RICH TRANSMEMBRANE MODULE 13 (Arabidopsis thaliana (Mouse-ear cress)).